The sequence spans 310 residues: Olfactory receptor 4C11 (310 aa).

At 1 to 23 (MQQNNSVPEFILLGLTQDPLRQK) the chain is on the extracellular side. N-linked (GlcNAc...) asparagine glycosylation is present at N4. A helical transmembrane segment spans residues 24 to 47 (IVFVIFLIFYMGTVVGNMLIIVTI). At 48–55 (KSSRTLGS) the chain is on the cytoplasmic side. The chain crosses the membrane as a helical span at residues 56-77 (PMYFFLFYLSFADSCFSTSTAP). At 78–98 (RLIVDALSEKKIITYNECMTQ) the chain is on the extracellular side. C95 and C187 are disulfide-bonded. A helical transmembrane segment spans residues 99 to 118 (VFALHLFGCMEIFVLILMAV). Residues 119–137 (DRYVAICKPLRYPTIMSQQ) are Cytoplasmic-facing. The chain crosses the membrane as a helical span at residues 138 to 156 (VCIILIVLAWIGSLIHSTA). The Extracellular segment spans residues 157 to 193 (QIILALRLPFCGPYLIDHYCCDLQPLLKLACMDTYMI). A helical membrane pass occupies residues 194–217 (NLLLVSNSGAICSSSFMILIISYI). Residues 218–233 (VILHSLRNHSAKGKKK) lie on the Cytoplasmic side of the membrane. Residues 234–256 (ALSACTSHIIVVILFFGPCIFIY) traverse the membrane as a helical segment. Residues 257–267 (TRPPTTFPMDK) lie on the Extracellular side of the membrane. The helical transmembrane segment at 268–287 (MVAVFYTIGTPFLNPLIYTL) threads the bilayer. Topologically, residues 288–310 (RNAEVKNAMRKLWHGKIISENKG) are cytoplasmic.

Belongs to the G-protein coupled receptor 1 family.

The protein resides in the cell membrane. Odorant receptor. This chain is Olfactory receptor 4C11 (OR4C11), found in Homo sapiens (Human).